Reading from the N-terminus, the 474-residue chain is Coronin-1C (474 aa).

WD repeat units lie at residues 25 to 70, 78 to 118, 128 to 168, 172 to 202, 215 to 249, and 263 to 303; these read DDIR…GRID, GHTG…LTLS, GHSK…ALIN, MHSD…RVID, AHEG…ALWN, and DTSN…PYVH. Residues 436–474 are a coiled coil; that stretch reads QNEAKLDEILKEIKSIKDTICNQDERISKLEQQMAKIAA. Lys-446 bears the N6-acetyllysine mark.

The protein belongs to the WD repeat coronin family. As to quaternary structure, binds F-actin. Interacts with RCC2. Interacts preferentially with nucleotide-free and GDP-bound RAC1. Interacts with VIM (via head domain). Isoform 1 and isoform 2 appear as homotrimers, while isoform 3 seems to exist as monomers. Interacts with MICAL2; this interaction recruits MICAL2 to the actin filaments. As to expression, ubiquitous.

Its subcellular location is the cell membrane. The protein localises to the cell projection. The protein resides in the lamellipodium. It localises to the ruffle membrane. It is found in the cytoplasm. Its subcellular location is the cytoskeleton. The protein localises to the cell cortex. The protein resides in the endosome membrane. It localises to the sarcolemma. It is found in the myofibril. Its subcellular location is the sarcomere. The protein localises to the synapse. Its function is as follows. Plays a role in directed cell migration by regulating the activation and subcellular location of RAC1. Increases the presence of activated RAC1 at the leading edge of migrating cells. Required for normal organization of the cytoskeleton, including the actin cytoskeleton, microtubules and the vimentin intermediate filaments. Plays a role in endoplasmic reticulum-associated endosome fission: localizes to endosome membrane tubules and promotes recruitment of TMCC1, leading to recruitment of the endoplasmic reticulum to endosome tubules for fission. Endosome membrane fission of early and late endosomes is essential to separate regions destined for lysosomal degradation from carriers to be recycled to the plasma membrane. Required for normal cell proliferation, cell migration, and normal formation of lamellipodia. Required for normal distribution of mitochondria within cells. Involved in myogenic differentiation. The polypeptide is Coronin-1C (Homo sapiens (Human)).